The following is a 178-amino-acid chain: S-alkylcysteine N-acetyltransferase (178 aa).

The region spanning 4 to 163 (DIFRLATVED…IGVMMHKVLI (160 aa)) is the N-acetyltransferase domain.

The protein belongs to the acetyltransferase family.

The catalysed reaction is an S-substituted L-cysteine + acetyl-CoA = an N-acetyl-L-cysteine-S-conjugate + CoA + H(+). It carries out the reaction S-benzyl-L-cysteine + acetyl-CoA = N-acetyl-S-benzyl-L-cysteine + CoA + H(+). It catalyses the reaction S-methyl-L-cysteine + acetyl-CoA = N-acetyl-S-methyl-L-cysteine + CoA + H(+). Its pathway is amino-acid metabolism. Functionally, involved in a cysteine salvage pathway from S-alkylcysteine. Catalyzes the first step in this pathway, i.e. the amine acetylation of an S-alkylcysteine with a preference for S-benzyl-L-cysteine over S-methyl-L-cysteine. This pathway is likely important in the catabolism of alkylated cysteine generated by proteolysis of alkylated glutathione formed in the detoxification of a wide range of electrophiles. The protein is S-alkylcysteine N-acetyltransferase of Bacillus subtilis (strain 168).